The primary structure comprises 255 residues: Syntaxin-6 (255 aa).

Ser2 bears the N-acetylserine mark. A Phosphoserine modification is found at Ser2. The segment at 2-168 (SMEDPFFVVK…QAQQQLIVEQ (167 aa)) is required for interaction with VPS51. Over 2-234 (SMEDPFFVVK…VSHMTSDRRQ (233 aa)) the chain is Cytoplasmic. Residues 41–74 (EEIDWTTNELRNNLRSIEWDLEDLDETISIVEAN) adopt a coiled-coil conformation. 2 positions are modified to phosphoserine: Ser129 and Ser152. A t-SNARE coiled-coil homology domain is found at 163-225 (QLIVEQQDEQ…DNVMKKLAKV (63 aa)). Residues 235-255 (WCAIAILFAVLLVVLILFLVL) form a helical; Anchor for type IV membrane protein membrane-spanning segment.

The protein belongs to the syntaxin family. As to quaternary structure, identified in a complex containing STX6, STX12, VAMP4 and VTI1A. Binds EEA1. Interacts with VPS45A. Interacts with MARCHF2; the interaction promotes MARCHF2-mediated ubiquitination and degradation of CFTR. Interacts with MARCHF3. Interacts with GOPC. Interacts with BLTP3B (via C-terminal coiled-coil domain). Interacts with BAIAP3; this interaction is increased in the presence of calcium. Interacts with VPS13B.

It is found in the golgi apparatus membrane. The protein resides in the golgi apparatus. Its subcellular location is the trans-Golgi network membrane. The protein localises to the recycling endosome membrane. Its function is as follows. SNARE promoting movement of transport vesicles to target membranes. Targets endosomes to the trans-Golgi network, and may therefore function in retrograde trafficking. Together with SNARE STX12, promotes movement of vesicles from endosomes to the cell membrane, and may therefore function in the endocytic recycling pathway. The chain is Syntaxin-6 (STX6) from Homo sapiens (Human).